The chain runs to 418 residues: Voltage-gated ClC-type chloride channel ClcB (418 aa).

The next 10 helical transmembrane spans lie at 5-25, 54-74, 146-166, 168-188, 222-242, 258-278, 291-311, 316-336, 352-372, and 380-400; these read LLIATVVGILAAFAVAGFRHA, LLTPALGGLAAGLLLMGWQKF, LWIACGAAAGMAAAYRAPLAG, LFIAEVLFGTMMLASLGPVII, ALIISTGVLAGLCGPLLLTLM, WQLALGGLIVGLLSLFTPAVW, APPLLMIIAGIFLCKLFAVLA, GAPGGVFTPTLFIGLAIGMLY, LLLGLTGMATLLAATTHAPIM, and MTGEYQLLPGLLIACVIASVI.

This sequence belongs to the chloride channel (TC 2.A.49) family. ClcB subfamily.

The protein localises to the cell inner membrane. Functionally, probably acts as an electrical shunt for an outwardly-directed proton pump that is linked to amino acid decarboxylation, as part of the extreme acid resistance (XAR) response. This chain is Voltage-gated ClC-type chloride channel ClcB, found in Escherichia coli (strain SMS-3-5 / SECEC).